The primary structure comprises 153 residues: Large ribosomal subunit protein uL15 (153 aa).

The segment at 21–41 is disordered; the sequence is RGIGSGKGKTGGRGIKGQKSR. A compositionally biased stretch (gly residues) spans 23-35; sequence IGSGKGKTGGRGI.

This sequence belongs to the universal ribosomal protein uL15 family. In terms of assembly, part of the 50S ribosomal subunit.

Functionally, binds to the 23S rRNA. The polypeptide is Large ribosomal subunit protein uL15 (Rickettsia africae (strain ESF-5)).